The sequence spans 240 residues: MTASERPHVSAAMTELDHPALYRLMTWLSPAFPVGGFAYSSGIEWAVEAGDVDDAASLRGWLSTMLTDGSGFCDAVFLVHAHRAMELGDIDRLREVAELAAAFVPSRERQLETTAQGRAFIEIARSAWNSPGLDDAVSQCEAMVYPVAVGVVGAAHGIQSSLLLHAYLHAVTSNWISAGSRLIPLGQTDSQRVLAALEPVVTATAVRAISASLDDIGSATFRADLASLRHETQYTRLFRS.

It belongs to the UreF family. As to quaternary structure, ureD, UreF and UreG form a complex that acts as a GTP-hydrolysis-dependent molecular chaperone, activating the urease apoprotein by helping to assemble the nickel containing metallocenter of UreC. The UreE protein probably delivers the nickel.

Its subcellular location is the cytoplasm. In terms of biological role, required for maturation of urease via the functional incorporation of the urease nickel metallocenter. The polypeptide is Urease accessory protein UreF (Bradyrhizobium sp. (strain BTAi1 / ATCC BAA-1182)).